Reading from the N-terminus, the 345-residue chain is N-acetyl-gamma-glutamyl-phosphate reductase (345 aa).

Residue Cys149 is part of the active site.

Belongs to the NAGSA dehydrogenase family. Type 1 subfamily.

Its subcellular location is the cytoplasm. The catalysed reaction is N-acetyl-L-glutamate 5-semialdehyde + phosphate + NADP(+) = N-acetyl-L-glutamyl 5-phosphate + NADPH + H(+). It functions in the pathway amino-acid biosynthesis; L-arginine biosynthesis; N(2)-acetyl-L-ornithine from L-glutamate: step 3/4. Functionally, catalyzes the NADPH-dependent reduction of N-acetyl-5-glutamyl phosphate to yield N-acetyl-L-glutamate 5-semialdehyde. In Janthinobacterium sp. (strain Marseille) (Minibacterium massiliensis), this protein is N-acetyl-gamma-glutamyl-phosphate reductase.